The sequence spans 329 residues: Malate dehydrogenase (329 aa).

12–18 (GAAGQIG) serves as a coordination point for NAD(+). Substrate is bound by residues Arg-93 and Arg-99. NAD(+) contacts are provided by residues Asn-106, Gln-113, and 130–132 (VGN). Asn-132 and Arg-163 together coordinate substrate. His-188 functions as the Proton acceptor in the catalytic mechanism.

This sequence belongs to the LDH/MDH superfamily. MDH type 2 family.

The catalysed reaction is (S)-malate + NAD(+) = oxaloacetate + NADH + H(+). Its activity is regulated as follows. Strongly inhibited by Hg(2+) and Zn(2+). Activated by Na(+), NH(4)(+), Ca(2+), Cu(2+) and Mg(2+). In terms of biological role, catalyzes the reversible oxidation of malate to oxaloacetate. Exhibits remarkably higher catalytic efficiency for oxaloacetate reduction than for malate oxidation in vitro. Highly specific for NAD(H). Can also use NADPH for oxaloacetate reduction, but catalytic efficiency is 97-fold higher with NADH. No activity detected with NADP(+) and malate. The chain is Malate dehydrogenase from Streptomyces avermitilis (strain ATCC 31267 / DSM 46492 / JCM 5070 / NBRC 14893 / NCIMB 12804 / NRRL 8165 / MA-4680).